The chain runs to 237 residues: MSRPSRVLGLPLLSLGLTLLVSTPLQAQEAQTFRAVKQDLVKLYQSHPSTFYCGCNIKFSGKKMAPDWESCGYLPRKQANRAARIEWEHVVPAWEFGHQLQCWQEGGRKNCGKSAEFNKMEGDMHNLFPAIGEVNGDRANYRFSDWNGKPNQYGKCQMLVDFKEQRVQPPKGPVRGQIARAYLYMGEQYGLRLAAQQRKLFEAWDRQYPADRWECERNRRIGKLQGNTNPFIEKQCQ.

The signal sequence occupies residues 1-27; that stretch reads MSRPSRVLGLPLLSLGLTLLVSTPLQA.

The protein belongs to the EndA/NucM nuclease family.

The protein localises to the periplasm. In terms of biological role, endonuclease which is capable of degrading plasmid DNA. The polypeptide is Periplasmic deoxyribonuclease (dnsH) (Aeromonas hydrophila).